The following is a 167-amino-acid chain: NADH-quinone oxidoreductase subunit B 2 (167 aa).

Residues Cys-38, Cys-39, Cys-103, and Cys-132 each contribute to the [4Fe-4S] cluster site.

This sequence belongs to the complex I 20 kDa subunit family. NDH-1 is composed of 14 different subunits. Subunits NuoB, C, D, E, F, and G constitute the peripheral sector of the complex. Requires [4Fe-4S] cluster as cofactor.

The protein localises to the cell inner membrane. The enzyme catalyses a quinone + NADH + 5 H(+)(in) = a quinol + NAD(+) + 4 H(+)(out). Functionally, NDH-1 shuttles electrons from NADH, via FMN and iron-sulfur (Fe-S) centers, to quinones in the respiratory chain. The immediate electron acceptor for the enzyme in this species is believed to be ubiquinone. Couples the redox reaction to proton translocation (for every two electrons transferred, four hydrogen ions are translocated across the cytoplasmic membrane), and thus conserves the redox energy in a proton gradient. This Rhizobium etli (strain CIAT 652) protein is NADH-quinone oxidoreductase subunit B 2.